The following is a 153-amino-acid chain: Arachidonate 5-lipoxygenase-activating protein (153 aa).

Residues 1-8 (MDQETVGN) lie on the Lumenal side of the membrane. The helical transmembrane segment at 9–30 (VVLLAIVTLISVIQNGFFAHKV) threads the bilayer. Residues 31–52 (EHESKTQNGRSFQRTGTLAFER) lie on the Cytoplasmic side of the membrane. Residues 53-77 (VYTANQNCVDAYPTFLVMLWSAGLL) traverse the membrane as a helical segment. Residues 78 to 80 (CSQ) are Lumenal-facing. A helical transmembrane segment spans residues 81–102 (VPAAFAGLMYLFVRQKYFVGYL). At 103–107 (GERRQ) the chain is on the cytoplasmic side. The stretch at 108–115 (STPGYIFG) is an intramembrane region. A helical membrane pass occupies residues 116–128 (KRIILFLFLMSLA). Over 129–153 (GIFNYYLILFFGSDFENYIKTITTT) the chain is Lumenal.

The protein belongs to the MAPEG family. As to quaternary structure, homotrimer. Interacts with LTC4S and ALOX5.

The protein resides in the nucleus membrane. Its subcellular location is the endoplasmic reticulum membrane. Required for leukotriene biosynthesis by ALOX5 (5-lipoxygenase). Anchors ALOX5 to the membrane. Binds arachidonic acid, and could play an essential role in the transfer of arachidonic acid to ALOX5. Binds to MK-886, a compound that blocks the biosynthesis of leukotrienes. The polypeptide is Arachidonate 5-lipoxygenase-activating protein (ALOX5AP) (Equus caballus (Horse)).